A 128-amino-acid polypeptide reads, in one-letter code: Large ribosomal subunit protein bL19 (128 aa).

It belongs to the bacterial ribosomal protein bL19 family.

In terms of biological role, this protein is located at the 30S-50S ribosomal subunit interface and may play a role in the structure and function of the aminoacyl-tRNA binding site. This is Large ribosomal subunit protein bL19 from Paraburkholderia xenovorans (strain LB400).